A 251-amino-acid polypeptide reads, in one-letter code: Small ribosomal subunit protein uS2 (251 aa).

It belongs to the universal ribosomal protein uS2 family.

The polypeptide is Small ribosomal subunit protein uS2 (Novosphingobium aromaticivorans (strain ATCC 700278 / DSM 12444 / CCUG 56034 / CIP 105152 / NBRC 16084 / F199)).